The sequence spans 98 residues: uncharacterized protein (98 aa).

A compositionally biased stretch (low complexity) spans Met-1–Pro-21. A disordered region spans residues Met-1 to Asp-26. Residues Met-29–Cys-49 traverse the membrane as a helical segment.

It is found in the host membrane. This is an uncharacterized protein from Equine herpesvirus 2 (strain 86/87) (EHV-2).